Here is a 761-residue protein sequence, read N- to C-terminus: T-box protein 1 (761 aa).

Disordered stretches follow at residues 1–85 and 167–210; these read MLGR…QPLT and QTDP…CSSP. 2 stretches are compositionally biased toward polar residues: residues 37–61 and 167–179; these read DLQN…NQAG and QTDP…FPQA. Low complexity-rich tracts occupy residues 180 to 191 and 198 to 210; these read SPSDLSTTSSQS and SSPS…CSSP. The segment at residues 287 to 456 is a DNA-binding region (T-box); that stretch reads LWRKFHEHRT…HNPFAKGFRD (170 aa). The segment covering 496–510 has biased composition (polar residues); that stretch reads TTGFPCQTNPTQRSN. Disordered regions lie at residues 496-515, 545-612, and 637-687; these read TTGF…QHEG, SGDA…TPAH, and VCSS…LLTT. The segment covering 600–612 has biased composition (basic and acidic residues); it reads GCERSNEKHTPAH. Residues 637–646 are compositionally biased toward polar residues; sequence VCSSDNSNPD. The segment covering 656-687 has biased composition (low complexity); the sequence is SPAGSGSPSVTSGTSLFTSGSSAAPSPPLLTT.

Its subcellular location is the nucleus. Probable transcriptional regulator involved in developmental processes. In Patiria pectinifera (Starfish), this protein is T-box protein 1 (tbr1).